Reading from the N-terminus, the 523-residue chain is Chitinase Chi52 (523 aa).

Residues 1-30 form the signal peptide; it reads MNQAVRFRPVITFALAFLLLITWFAPRADA. Residues 80-101 are disordered; it reads GSGGETPTPDTAPPSVPAGLTS. The Fibronectin type-III domain maps to 95 to 180; it reads VPAGLTSSSI…TSLSVTTSNG (86 aa). The GH18 domain maps to 190 to 513; it reads KWLIGYWHNF…SAHRPFLNGL (324 aa). Residue Glu302 is the Proton donor of the active site.

Belongs to the glycosyl hydrolase 18 family. Chitinase class II subfamily.

The catalysed reaction is Random endo-hydrolysis of N-acetyl-beta-D-glucosaminide (1-&gt;4)-beta-linkages in chitin and chitodextrins.. Its activity is regulated as follows. Activity is inhibited by Cu(2+) and Co(2+), and almost completely inhibited by SDS. Acidic chitinase that displays a broad substrate specificity, showing the highest specific activity toward colloidal chitin, followed by ethylene glycol chitin and ball milled chitin, but exhibits no activity toward powdery chitin and chitosan. Hydrolyzes colloidal chitin and chitooligosaccharides with degree of polymerization 2-5 to release mainly N-acetyl chitobiose. Displays inhibition effects on the growth of some phytopathogenic fungi, including Alternaria alstroemeriae, Botrytis cinerea, Rhizoctonia solani, Sclerotinia sclerotiorum and Valsa mali. In Paenibacillus xylanexedens, this protein is Chitinase Chi52.